Here is a 177-residue protein sequence, read N- to C-terminus: 2-C-methyl-D-erythritol 2,4-cyclodiphosphate synthase (177 aa).

Residues Asp-23 and His-25 each contribute to the a divalent metal cation site. 4-CDP-2-C-methyl-D-erythritol 2-phosphate contacts are provided by residues 23 to 25 (DVH) and 49 to 50 (HS). His-57 serves as a coordination point for a divalent metal cation. 4-CDP-2-C-methyl-D-erythritol 2-phosphate is bound by residues 71-73 (DIG), 76-80 (FSDTD), 115-121 (AQAPRMA), and Arg-157.

This sequence belongs to the IspF family. In terms of assembly, homotrimer. It depends on a divalent metal cation as a cofactor.

The enzyme catalyses 4-CDP-2-C-methyl-D-erythritol 2-phosphate = 2-C-methyl-D-erythritol 2,4-cyclic diphosphate + CMP. The protein operates within isoprenoid biosynthesis; isopentenyl diphosphate biosynthesis via DXP pathway; isopentenyl diphosphate from 1-deoxy-D-xylulose 5-phosphate: step 4/6. Functionally, involved in the biosynthesis of isopentenyl diphosphate (IPP) and dimethylallyl diphosphate (DMAPP), two major building blocks of isoprenoid compounds. Catalyzes the conversion of 4-diphosphocytidyl-2-C-methyl-D-erythritol 2-phosphate (CDP-ME2P) to 2-C-methyl-D-erythritol 2,4-cyclodiphosphate (ME-CPP) with a corresponding release of cytidine 5-monophosphate (CMP). In Nitrosospira multiformis (strain ATCC 25196 / NCIMB 11849 / C 71), this protein is 2-C-methyl-D-erythritol 2,4-cyclodiphosphate synthase.